The chain runs to 252 residues: Imidazole glycerol phosphate synthase subunit HisF (252 aa).

Residues D11 and D130 contribute to the active site.

The protein belongs to the HisA/HisF family. In terms of assembly, heterodimer of HisH and HisF.

Its subcellular location is the cytoplasm. The enzyme catalyses 5-[(5-phospho-1-deoxy-D-ribulos-1-ylimino)methylamino]-1-(5-phospho-beta-D-ribosyl)imidazole-4-carboxamide + L-glutamine = D-erythro-1-(imidazol-4-yl)glycerol 3-phosphate + 5-amino-1-(5-phospho-beta-D-ribosyl)imidazole-4-carboxamide + L-glutamate + H(+). It participates in amino-acid biosynthesis; L-histidine biosynthesis; L-histidine from 5-phospho-alpha-D-ribose 1-diphosphate: step 5/9. In terms of biological role, IGPS catalyzes the conversion of PRFAR and glutamine to IGP, AICAR and glutamate. The HisF subunit catalyzes the cyclization activity that produces IGP and AICAR from PRFAR using the ammonia provided by the HisH subunit. This chain is Imidazole glycerol phosphate synthase subunit HisF, found in Geobacillus sp. (strain WCH70).